Consider the following 232-residue polypeptide: MKIGIIGAMEEEVTLLRDKIENCQTLSLGGCEIYTGQLNGTDVALLKSGIGKVAAALGATLLLERCKPDVIINTGSAGGLAPSLKVGDIVVSDEARYHDADVTAFGYEYGQLPGCPAGFKADDNLIAAAESCIAELNLNAVRGLIVSGDAFINGSVGLAKIRHNFPNAIAVEMEATAIAHVCHNFSVPFVVVRAISDVADQQSHLSFDEFLAVAAKQSTIMVETLVQKLARG.

The active-site Proton acceptor is the E12. Substrate is bound by residues G78, I152, and 173–174 (ME). D197 serves as the catalytic Proton donor.

Belongs to the PNP/UDP phosphorylase family. MtnN subfamily. Homodimer.

It carries out the reaction S-adenosyl-L-homocysteine + H2O = S-(5-deoxy-D-ribos-5-yl)-L-homocysteine + adenine. The enzyme catalyses S-methyl-5'-thioadenosine + H2O = 5-(methylsulfanyl)-D-ribose + adenine. The catalysed reaction is 5'-deoxyadenosine + H2O = 5-deoxy-D-ribose + adenine. The protein operates within amino-acid biosynthesis; L-methionine biosynthesis via salvage pathway; S-methyl-5-thio-alpha-D-ribose 1-phosphate from S-methyl-5'-thioadenosine (hydrolase route): step 1/2. In terms of biological role, catalyzes the irreversible cleavage of the glycosidic bond in both 5'-methylthioadenosine (MTA) and S-adenosylhomocysteine (SAH/AdoHcy) to adenine and the corresponding thioribose, 5'-methylthioribose and S-ribosylhomocysteine, respectively. Also cleaves 5'-deoxyadenosine, a toxic by-product of radical S-adenosylmethionine (SAM) enzymes, into 5-deoxyribose and adenine. Thus, is required for in vivo function of the radical SAM enzymes biotin synthase and lipoic acid synthase, that are inhibited by 5'-deoxyadenosine accumulation. The polypeptide is 5'-methylthioadenosine/S-adenosylhomocysteine nucleosidase (Enterobacter sp. (strain 638)).